Reading from the N-terminus, the 535-residue chain is D-2-hydroxyglutarate dehydrogenase, mitochondrial (535 aa).

The N-terminal 50 residues, 1-50, are a transit peptide targeting the mitochondrion; that stretch reads MVLHLVPRWSASLFRASPRWKKTYSQRASAQLKWLGCPRSVYSPLACRAY. The FAD-binding PCMH-type domain maps to 110–289; it reads VRGCSKVLLR…TAVSIVCPPR (180 aa). N6-succinyllysine is present on Lys115. (R)-2-hydroxyglutarate contacts are provided by Arg400, Thr404, and Lys415. (R)-lactate is bound at residue Arg400. Residues Arg400, Thr404, and Lys415 each coordinate (R)-malate. 2 residues coordinate Zn(2+): His448 and His455. (R)-2-hydroxyglutarate is bound at residue Asn457. Residue Glu489 participates in Zn(2+) binding. Position 490 (His490) interacts with (R)-2-hydroxyglutarate. His490 is a (R)-lactate binding site. Residue His490 participates in (R)-malate binding.

Belongs to the FAD-binding oxidoreductase/transferase type 4 family. It depends on FAD as a cofactor.

The protein resides in the mitochondrion. It catalyses the reaction (R)-2-hydroxyglutarate + A = 2-oxoglutarate + AH2. The enzyme catalyses (R)-malate + A = oxaloacetate + AH2. Its activity is regulated as follows. Activated by zinc, cobalt and manganese ions. Inhibited by EDTA. Functionally, catalyzes the oxidation of D-2-hydroxyglutarate (D-2-HG) to alpha-ketoglutarate. Also catalyzes the oxidation of other D-2-hydroxyacids, such as D-malate (D-MAL) and D-lactate (D-LAC). Exhibits high activities towards D-2-HG and D-MAL but a very weak activity towards D-LAC. This chain is D-2-hydroxyglutarate dehydrogenase, mitochondrial, found in Rattus norvegicus (Rat).